The primary structure comprises 658 residues: Putative phospholipase B-like lamina ancestor (658 aa).

A signal peptide spans 1–29 (MLKVVGASWQKTRIGTYILIGAGLLVIGA). N-linked (GlcNAc...) asparagine glycosylation is found at asparagine 229, asparagine 465, and asparagine 486.

It belongs to the phospholipase B-like family. As to expression, expressed in neural and glial progenitors prior to, but not after, differentiation. Not expressed in late third instar disks, but is expressed uniformly by early third instar disks, in the imaginal ring of the proventriculus and in the salivary gland.

It is found in the secreted. Functionally, putative phospholipase. Involved in the regulation of cellular plasticity in imaginal disks. This is Putative phospholipase B-like lamina ancestor (lama) from Drosophila melanogaster (Fruit fly).